The sequence spans 160 residues: Protein cornichon homolog 3 (160 aa).

The Cytoplasmic segment spans residues 1 to 10 (MAFTFAAFCY). Residues 11-31 (MLSLVLCAALIFFAIWHIIAF) traverse the membrane as a helical segment. Over 32–72 (DELRTDFKSPIDQCNPVHARERLRNIERICFLLRKLVLPEY) the chain is Lumenal. Residues 73 to 93 (SIHSLFCIMFLCAQEWLTLGL) traverse the membrane as a helical segment. Topologically, residues 94–138 (NVPLLFYHFWRYFHCPADSSELAYDPPVVMNADTLSYCQKEAWCK) are cytoplasmic. Residues 139–159 (LAFYLLSFFYYLYCMIYTLVS) traverse the membrane as a helical segment. Position 160 (Ser-160) is a topological domain, lumenal.

This sequence belongs to the cornichon family. Acts as an auxiliary subunit for AMPA-selective glutamate receptors (AMPARs). Found in a complex with GRIA1, GRIA2, GRIA3, GRIA4, CNIH2, CACNG2, CACNG3, CACNG4, CACNG5, CACNG7 and CACNG8. As to expression, expression is up-regulated in dorsolateral prefrontal cortex of patients with schizophrenia (postmortem brain study).

Its subcellular location is the postsynaptic cell membrane. In terms of biological role, regulates the trafficking and gating properties of AMPA-selective glutamate receptors (AMPARs). Promotes their targeting to the cell membrane and synapses and modulates their gating properties by regulating their rates of activation, deactivation and desensitization. This is Protein cornichon homolog 3 (CNIH3) from Homo sapiens (Human).